A 447-amino-acid chain; its full sequence is Secretin receptor (447 aa).

An N-terminal signal peptide occupies residues 1-28 (MLSTMSPRLSLLLLWLLLLINAAHPVGA). The Extracellular segment spans residues 29 to 140 (LPRLCDVRRV…NERRHAYLLK (112 aa)). 3 disulfide bridges follow: C46–C74, C65–C106, and C88–C122. N-linked (GlcNAc...) asparagine glycans are attached at residues N71, N99, N105, and N127. A helical transmembrane segment spans residues 141-166 (LKVMYTVGYSSSLAMLLVALSILCSF). Topologically, residues 167–173 (RRLHCTR) are cytoplasmic. A helical membrane pass occupies residues 174-194 (NYIHMHLFVSFILRALSNFIK). At 195-215 (DAVLFPADDVTYCDAHRAGCK) the chain is on the extracellular side. A disulfide bridge connects residues C214 and C284. The chain crosses the membrane as a helical span at residues 216–238 (LVMIFFQYCIMANYAWLLVEGLY). Residues 239 to 253 (LHTLLAISFFSERKC) lie on the Cytoplasmic side of the membrane. Residues 254-275 (LQAFVLFGWGSPAIFVALWAVT) form a helical membrane-spanning segment. Topologically, residues 276-290 (RHFLEDFGCWDINSN) are extracellular. N-linked (GlcNAc...) asparagine glycosylation occurs at N290. Residues 291 to 314 (ASIWWVIRGPVILSIVINFIFFIN) traverse the membrane as a helical segment. The Cytoplasmic segment spans residues 315–339 (ILRILMRKLRTQETRGNETHHYKRL). Residues 340–355 (AKSTLLLIPLFGIHYI) traverse the membrane as a helical segment. The Extracellular segment spans residues 356-366 (VFAFSPEGAME). Residues 367-390 (VQLFFELALGSFQGLVVAVLYCFL) traverse the membrane as a helical segment. Residues 391–447 (NGELEVQKKWRQWHLQEFPLRPVALSNSFSNATNGPTHSTKAGTSEQSRSIPGANVI) lie on the Cytoplasmic side of the membrane. Over residues 423–440 (TNGPTHSTKAGTSEQSRS) the composition is skewed to polar residues. The interval 423–447 (TNGPTHSTKAGTSEQSRSIPGANVI) is disordered.

This sequence belongs to the G-protein coupled receptor 2 family. Phosphorylated on Ser and Thr residues at the cytoplasmic C-terminus by G protein-coupled receptor kinases (GRKs). As to expression, in brain, expressed in the hippocampal CA1 region, the lower layer of cerebral cortex, the anterior olfactory nuclei, the anterior ventrolateral thalamus, the lateral region of hypothalamus, substantia nigra, tegmental area and central nucleus of the inferior colliculus, the ventral supramamillary nucleus and the cerebellum. Expressed in brown adipocytes: expression predominates in mature brown adipocytes (at protein level). Detected in the renal medulla, where it localized predominantly on the basolateral membranes of cells in the collecting ducts (blue arrow) and the ascending thick segments of the loop of Henle.

The protein resides in the cell membrane. The protein localises to the basolateral cell membrane. G protein-coupled receptor activated by secretin (SCT), which is involved in different processes such as regulation of the pH of the duodenal content, food intake and water homeostasis. Ligand binding causes a conformation change that triggers signaling via guanine nucleotide-binding proteins (G proteins) and activates cAMP-dependent pathway. Upon binding to secretin, regulates the pH of the duodenum by (1) inhibiting the secretion of gastric acid from the parietal cells of the stomach and (2) stimulating the production of bicarbonate (NaHCO(3)) from the ductal cells of the pancreas. In addition to regulating the pH of the duodenal content, plays a central role in diet induced thermogenesis: acts as a non-sympathetic brown fat (BAT) activator mediating prandial thermogenesis, which consequentially induces satiation. Mechanistically, secretin released by the gut after a meal binds to secretin receptor (SCTR) in brown adipocytes, activating brown fat thermogenesis by stimulating lipolysis, which is sensed in the brain and promotes satiation. Also able to stimulate lipolysis in white adipocytes. Also plays an important role in cellular osmoregulation by regulating renal water reabsorption. Also plays a role in the central nervous system: required for synaptic plasticity. This is Secretin receptor from Mus musculus (Mouse).